Consider the following 360-residue polypeptide: Protein MGF 360-2L (360 aa).

It belongs to the asfivirus MGF 360 family.

In terms of biological role, plays a role in virus cell tropism, and may be required for efficient virus replication in macrophages. The protein is Protein MGF 360-2L of Ornithodoros (relapsing fever ticks).